A 1157-amino-acid polypeptide reads, in one-letter code: ATP-dependent helicase/deoxyribonuclease subunit B (1157 aa).

Residues 1-299 (MSIRFIIGRA…SHLEKYFFVR (299 aa)) enclose the UvrD-like helicase ATP-binding domain. ATP is bound at residue 8–15 (GRAGAGKT). The 312-residue stretch at 279-590 (GNTARFKSPA…LVASLERSRN (312 aa)) folds into the UvrD-like helicase C-terminal domain. [4Fe-4S] cluster is bound by residues cysteine 792, cysteine 1112, cysteine 1115, and cysteine 1121.

The protein belongs to the helicase family. AddB/RexB type 1 subfamily. In terms of assembly, heterodimer of AddA and AddB. It depends on Mg(2+) as a cofactor. [4Fe-4S] cluster is required as a cofactor.

The heterodimer acts as both an ATP-dependent DNA helicase and an ATP-dependent, dual-direction single-stranded exonuclease. Recognizes the chi site generating a DNA molecule suitable for the initiation of homologous recombination. The AddB subunit has 5' -&gt; 3' nuclease activity but not helicase activity. This is ATP-dependent helicase/deoxyribonuclease subunit B from Pelotomaculum thermopropionicum (strain DSM 13744 / JCM 10971 / SI).